A 147-amino-acid polypeptide reads, in one-letter code: 3-dehydroquinate dehydratase (147 aa).

Tyr23 (proton acceptor) is an active-site residue. Positions 74, 80, and 87 each coordinate substrate. The active-site Proton donor is the His100. Substrate-binding positions include 101 to 102 (LS) and Arg111.

The protein belongs to the type-II 3-dehydroquinase family. In terms of assembly, homododecamer.

It catalyses the reaction 3-dehydroquinate = 3-dehydroshikimate + H2O. It functions in the pathway metabolic intermediate biosynthesis; chorismate biosynthesis; chorismate from D-erythrose 4-phosphate and phosphoenolpyruvate: step 3/7. Its function is as follows. Catalyzes a trans-dehydration via an enolate intermediate. The chain is 3-dehydroquinate dehydratase from Glaesserella parasuis serovar 5 (strain SH0165) (Haemophilus parasuis).